The chain runs to 619 residues: Dihydroxy-acid dehydratase (619 aa).

Asp-81 provides a ligand contact to Mg(2+). Cys-122 lines the [2Fe-2S] cluster pocket. Positions 123 and 124 each coordinate Mg(2+). Lys-124 is modified (N6-carboxylysine). Cys-201 provides a ligand contact to [2Fe-2S] cluster. Glu-496 contacts Mg(2+). Residue Ser-522 is the Proton acceptor of the active site.

It belongs to the IlvD/Edd family. Homodimer. Requires [2Fe-2S] cluster as cofactor. It depends on Mg(2+) as a cofactor.

The enzyme catalyses (2R)-2,3-dihydroxy-3-methylbutanoate = 3-methyl-2-oxobutanoate + H2O. The catalysed reaction is (2R,3R)-2,3-dihydroxy-3-methylpentanoate = (S)-3-methyl-2-oxopentanoate + H2O. The protein operates within amino-acid biosynthesis; L-isoleucine biosynthesis; L-isoleucine from 2-oxobutanoate: step 3/4. It functions in the pathway amino-acid biosynthesis; L-valine biosynthesis; L-valine from pyruvate: step 3/4. Functionally, functions in the biosynthesis of branched-chain amino acids. Catalyzes the dehydration of (2R,3R)-2,3-dihydroxy-3-methylpentanoate (2,3-dihydroxy-3-methylvalerate) into 2-oxo-3-methylpentanoate (2-oxo-3-methylvalerate) and of (2R)-2,3-dihydroxy-3-methylbutanoate (2,3-dihydroxyisovalerate) into 2-oxo-3-methylbutanoate (2-oxoisovalerate), the penultimate precursor to L-isoleucine and L-valine, respectively. The polypeptide is Dihydroxy-acid dehydratase (Paracidovorax citrulli (strain AAC00-1) (Acidovorax citrulli)).